A 134-amino-acid polypeptide reads, in one-letter code: (R)-specific enoyl-CoA hydratase (134 aa).

Residues 5–119 enclose the MaoC-like domain; that stretch reads SLEVGQKARL…ATLTTRIFTQ (115 aa). Residues 32-37, Gly55, and Phe84 each bind a (3R)-3-hydroxyacyl-CoA; that span reads DFNPLH.

Homodimer.

The catalysed reaction is a (3R)-3-hydroxyacyl-CoA = a (2E)-enoyl-CoA + H2O. In terms of biological role, catalyzes the hydration of trans-2-enoyl-CoA with a chain-length of 4-6 carbon atoms, forming the corresponding (3R)-3-hydroxyacyl-CoA. This chain is (R)-specific enoyl-CoA hydratase (phaJ), found in Aeromonas caviae (Aeromonas punctata).